Here is a 327-residue protein sequence, read N- to C-terminus: Annexin A8 (327 aa).

4 Annexin repeats span residues 21–92, 93–164, 177–249, and 253–324; these read FNPD…ALMY, PPYR…CLLQ, GLAL…TVVK, and NLHG…NLVG. Ca(2+) is bound by residues Met-266, Gly-268, Gly-270, and Asp-310.

This sequence belongs to the annexin family.

Functionally, this protein is an anticoagulant protein that acts as an indirect inhibitor of the thromboplastin-specific complex, which is involved in the blood coagulation cascade. The polypeptide is Annexin A8 (ANXA8) (Bos taurus (Bovine)).